Consider the following 207-residue polypeptide: Large ribosomal subunit protein uL4 (207 aa).

Residues 49–77 (HAVKNRSAVRGGGKKPWRQKGTGRARQGS) form a disordered region. Residues 60-71 (GGKKPWRQKGTG) show a composition bias toward basic residues.

This sequence belongs to the universal ribosomal protein uL4 family. In terms of assembly, part of the 50S ribosomal subunit.

One of the primary rRNA binding proteins, this protein initially binds near the 5'-end of the 23S rRNA. It is important during the early stages of 50S assembly. It makes multiple contacts with different domains of the 23S rRNA in the assembled 50S subunit and ribosome. Its function is as follows. Forms part of the polypeptide exit tunnel. In Levilactobacillus brevis (strain ATCC 367 / BCRC 12310 / CIP 105137 / JCM 1170 / LMG 11437 / NCIMB 947 / NCTC 947) (Lactobacillus brevis), this protein is Large ribosomal subunit protein uL4.